Consider the following 65-residue polypeptide: Small ribosomal subunit protein eS27 (65 aa).

Residues C20, C23, C39, and C42 each coordinate Zn(2+). The C4-type zinc-finger motif lies at 20–42; it reads CIDCGNEQIVFSNPATTVRCLVC.

It belongs to the eukaryotic ribosomal protein eS27 family. As to quaternary structure, part of the 30S ribosomal subunit. Requires Zn(2+) as cofactor.

The sequence is that of Small ribosomal subunit protein eS27 from Thermococcus onnurineus (strain NA1).